A 293-amino-acid polypeptide reads, in one-letter code: 4-diphosphocytidyl-2-C-methyl-D-erythritol kinase (293 aa).

Lys16 is a catalytic residue. 99–109 (PMGAGLGGGSS) is an ATP binding site. Asp141 is a catalytic residue.

This sequence belongs to the GHMP kinase family. IspE subfamily.

The catalysed reaction is 4-CDP-2-C-methyl-D-erythritol + ATP = 4-CDP-2-C-methyl-D-erythritol 2-phosphate + ADP + H(+). The protein operates within isoprenoid biosynthesis; isopentenyl diphosphate biosynthesis via DXP pathway; isopentenyl diphosphate from 1-deoxy-D-xylulose 5-phosphate: step 3/6. In terms of biological role, catalyzes the phosphorylation of the position 2 hydroxy group of 4-diphosphocytidyl-2C-methyl-D-erythritol. This is 4-diphosphocytidyl-2-C-methyl-D-erythritol kinase from Burkholderia ambifaria (strain MC40-6).